Consider the following 404-residue polypeptide: F-box protein At3g57590 (404 aa).

Residues Met-1–Arg-47 form the F-box domain.

The chain is F-box protein At3g57590 from Arabidopsis thaliana (Mouse-ear cress).